The following is a 290-amino-acid chain: Lipoyl synthase (290 aa).

[4Fe-4S] cluster-binding residues include Cys36, Cys41, Cys47, Cys62, Cys66, Cys69, and Ser275. One can recognise a Radical SAM core domain in the interval 48–264 (FSKKTATFMI…KEEALKIGFS (217 aa)).

Belongs to the radical SAM superfamily. Lipoyl synthase family. [4Fe-4S] cluster serves as cofactor.

It is found in the cytoplasm. The enzyme catalyses [[Fe-S] cluster scaffold protein carrying a second [4Fe-4S](2+) cluster] + N(6)-octanoyl-L-lysyl-[protein] + 2 oxidized [2Fe-2S]-[ferredoxin] + 2 S-adenosyl-L-methionine + 4 H(+) = [[Fe-S] cluster scaffold protein] + N(6)-[(R)-dihydrolipoyl]-L-lysyl-[protein] + 4 Fe(3+) + 2 hydrogen sulfide + 2 5'-deoxyadenosine + 2 L-methionine + 2 reduced [2Fe-2S]-[ferredoxin]. The protein operates within protein modification; protein lipoylation via endogenous pathway; protein N(6)-(lipoyl)lysine from octanoyl-[acyl-carrier-protein]: step 2/2. Functionally, catalyzes the radical-mediated insertion of two sulfur atoms into the C-6 and C-8 positions of the octanoyl moiety bound to the lipoyl domains of lipoate-dependent enzymes, thereby converting the octanoylated domains into lipoylated derivatives. This Alkaliphilus metalliredigens (strain QYMF) protein is Lipoyl synthase.